The primary structure comprises 374 residues: Layilin (374 aa).

Positions 1–24 (MQPGPALQAVLLAVLLSEPRSSKG) are cleaved as a signal peptide. Over 25–221 (RLLSGQLVCR…TKETFKESRE (197 aa)) the chain is Extracellular. In terms of domain architecture, C-type lectin spans 37-177 (TRRPCYKVIY…CNMKNNFICK (141 aa)). Disulfide bonds link Cys-63–Cys-176 and Cys-142–Cys-168. Asn-109 carries N-linked (GlcNAc...) asparagine glycosylation. Positions 184-212 (STTPSIRPGGEATEPPTPVLPEETQKEDT) are disordered. Residues 222-242 (AALNLAYILIPSIPLFLLLVV) traverse the membrane as a helical segment. Over 243 to 374 (TSAACWVWIC…SGWVENEIYY (132 aa)) the chain is Cytoplasmic. Residues Ser-279 and Ser-292 each carry the phosphoserine modification. The tract at residues 323–367 (DYDNMAVNPSESGFVTLASMESGFVTNDIYEFSPDRMGRSKESGW) is interaction with NF2. Residues 330–374 (NPSESGFVTLASMESGFVTNDIYEFSPDRMGRSKESGWVENEIYY) are interaction with TLN1. 5 repeat units span residues 333–337 (ESGFV), 343–347 (ESGFV), 349–352 (NDIY), 364–368 (ESGWV), and 370–373 (NEIY). Residues 333 to 368 (ESGFVTLASMESGFVTNDIYEFSPDRMGRSKESGWV) form a 3 X 5 AA repeats of E-S-G-X-V region. Positions 349–373 (NDIYEFSPDRMGRSKESGWVENEIY) are 2 X 4 AA repeats of N-X-I-Y.

In terms of assembly, interacts with NF2 and RDX. Interacts with TLN1. In terms of tissue distribution, widely expressed. Abundant in the ovary.

Its subcellular location is the membrane. Receptor for hyaluronate. The sequence is that of Layilin (LAYN) from Cricetulus griseus (Chinese hamster).